The following is a 256-amino-acid chain: Small ribosomal subunit protein eS1 (256 aa).

N-acetylalanine; partial is present on Ala-2.

The protein belongs to the eukaryotic ribosomal protein eS1 family. In terms of assembly, component of the small ribosomal subunit. Mature ribosomes consist of a small (40S) and a large (60S) subunit. The 40S subunit contains about 33 different proteins and 1 molecule of RNA (18S). The 60S subunit contains about 49 different proteins and 3 molecules of RNA (25S, 5.8S and 5S).

The protein resides in the cytoplasm. This is Small ribosomal subunit protein eS1 from Komagataella phaffii (strain GS115 / ATCC 20864) (Yeast).